The following is a 35-amino-acid chain: Cecropin-A (35 aa).

Leu35 is modified (leucine amide).

As to quaternary structure, monomer. Hemolymph.

Its subcellular location is the secreted. Cecropins have lytic and antibacterial activity against several Gram-positive and Gram-negative bacteria. Also has activity against fungi. This chain is Cecropin-A, found in Heliothis virescens (Tobacco budworm moth).